The sequence spans 391 residues: Autophagy-related protein 18d (391 aa).

A disordered region spans residues Met-1–Gly-24. WD repeat units lie at residues Ser-31–Arg-69, Asp-74–Glu-118, Ala-203–Glu-243, and Val-248–Asp-287.

Belongs to the WD repeat PROPPIN family. In terms of assembly, component of the PI(3,5)P2 regulatory complex at least composed of ATG18, SAC/FIG4, FAB1 and VAC14. As to expression, expressed in roots, stems, flowers and leaves.

The protein resides in the preautophagosomal structure membrane. It localises to the vacuole membrane. In terms of biological role, the PI(3,5)P2 regulatory complex regulates both the synthesis and turnover of phosphatidylinositol 3,5-bisphosphate (PtdIns(3,5)P2). Required for autophagy. In Arabidopsis thaliana (Mouse-ear cress), this protein is Autophagy-related protein 18d (ATG18D).